Consider the following 404-residue polypeptide: Cysteine desulfurase IscS (404 aa).

Residues alanine 75–threonine 76, asparagine 155, glutamine 183, and serine 203–histidine 205 each bind pyridoxal 5'-phosphate. Position 206 is an N6-(pyridoxal phosphate)lysine (lysine 206). Residue threonine 243 participates in pyridoxal 5'-phosphate binding. Cysteine 328 acts as the Cysteine persulfide intermediate in catalysis. Residue cysteine 328 participates in [2Fe-2S] cluster binding.

This sequence belongs to the class-V pyridoxal-phosphate-dependent aminotransferase family. NifS/IscS subfamily. In terms of assembly, homodimer. Forms a heterotetramer with IscU, interacts with other sulfur acceptors. Pyridoxal 5'-phosphate serves as cofactor.

It is found in the cytoplasm. It carries out the reaction (sulfur carrier)-H + L-cysteine = (sulfur carrier)-SH + L-alanine. Its pathway is cofactor biosynthesis; iron-sulfur cluster biosynthesis. In terms of biological role, master enzyme that delivers sulfur to a number of partners involved in Fe-S cluster assembly, tRNA modification or cofactor biosynthesis. Catalyzes the removal of elemental sulfur atoms from cysteine to produce alanine. Functions as a sulfur delivery protein for Fe-S cluster synthesis onto IscU, an Fe-S scaffold assembly protein, as well as other S acceptor proteins. The chain is Cysteine desulfurase IscS from Pseudomonas syringae pv. tomato (strain ATCC BAA-871 / DC3000).